A 96-amino-acid chain; its full sequence is Small ribosomal subunit protein bS6 (96 aa).

The protein belongs to the bacterial ribosomal protein bS6 family.

Its function is as follows. Binds together with bS18 to 16S ribosomal RNA. In Mycobacteroides abscessus (strain ATCC 19977 / DSM 44196 / CCUG 20993 / CIP 104536 / JCM 13569 / NCTC 13031 / TMC 1543 / L948) (Mycobacterium abscessus), this protein is Small ribosomal subunit protein bS6.